A 291-amino-acid polypeptide reads, in one-letter code: Phosphate import ATP-binding protein PstB (291 aa).

The ABC transporter domain maps to 45–286 (YSTQNLDLWY…PADKQTEDYI (242 aa)). 77-84 (GPSGCGKS) provides a ligand contact to ATP.

The protein belongs to the ABC transporter superfamily. Phosphate importer (TC 3.A.1.7) family. As to quaternary structure, the complex is composed of two ATP-binding proteins (PstB), two transmembrane proteins (PstC and PstA) and a solute-binding protein (PstS).

It is found in the cell membrane. It catalyses the reaction phosphate(out) + ATP + H2O = ADP + 2 phosphate(in) + H(+). In terms of biological role, part of the ABC transporter complex PstSACB involved in phosphate import. Responsible for energy coupling to the transport system. This is Phosphate import ATP-binding protein PstB from Staphylococcus epidermidis (strain ATCC 35984 / DSM 28319 / BCRC 17069 / CCUG 31568 / BM 3577 / RP62A).